A 63-amino-acid chain; its full sequence is Sarcotoxin-1B (63 aa).

Residues 1–23 (MNFNKVFIFVALILAVFAGQSQA) form the signal peptide. An Arginine amide modification is found at arginine 62.

This sequence belongs to the cecropin family.

It is found in the secreted. In terms of biological role, sarcotoxins, which are potent bactericidal proteins, are produced in response to injury. They are cytotoxic to both Gram-positive and Gram-negative bacteria. This is Sarcotoxin-1B from Sarcophaga peregrina (Flesh fly).